Here is a 391-residue protein sequence, read N- to C-terminus: Na(+)/H(+) antiporter NhaA (391 aa).

11 consecutive transmembrane segments (helical) span residues 14-34 (GGII…LGAT), 59-79 (MLLW…GLEV), 95-115 (AFPV…YLAF), 125-145 (GWAI…ALLG), 154-174 (IFLM…IALF), 180-200 (SILS…LNIF), 219-239 (VLKS…FIPL), 254-274 (VLHP…NAGV), 292-312 (IIAG…WLAL), 328-348 (IMAV…ISTL), and 357-377 (LIVW…FVGY).

It belongs to the NhaA Na(+)/H(+) (TC 2.A.33) antiporter family.

Its subcellular location is the cell inner membrane. The enzyme catalyses Na(+)(in) + 2 H(+)(out) = Na(+)(out) + 2 H(+)(in). Functionally, na(+)/H(+) antiporter that extrudes sodium in exchange for external protons. The protein is Na(+)/H(+) antiporter NhaA of Enterobacter sp. (strain 638).